The following is a 205-amino-acid chain: Beta-crystallin B2 (205 aa).

The residue at position 2 (A2) is an N-acetylalanine. The interval 2-16 is N-terminal arm; it reads ASDHQSPATKQQQPS. Beta/gamma crystallin 'Greek key' domains are found at residues 17–56 and 57–101; these read SKIV…LVHS and GPWV…RPIK. The connecting peptide stretch occupies residues 102–106; it reads VDSQE. 2 Beta/gamma crystallin 'Greek key' domains span residues 107 to 148 and 149 to 191; these read HKIV…RVQS and GTWV…RRIR. Positions 193-205 are C-terminal arm; sequence MQWHQRGTFHPTN.

Belongs to the beta/gamma-crystallin family. In terms of assembly, homo/heterodimer, or complexes of higher-order. The structure of beta-crystallin oligomers seems to be stabilized through interactions between the N-terminal arms. The N-terminus is blocked.

Its function is as follows. Crystallins are the dominant structural components of the vertebrate eye lens. The sequence is that of Beta-crystallin B2 from Aquarana catesbeiana (American bullfrog).